Reading from the N-terminus, the 142-residue chain is Hemoglobin subunit alpha-A (142 aa).

Positions 2 to 142 (VLSAADKTNV…VGAVLTAKYR (141 aa)) constitute a Globin domain. H59 is a binding site for O2. H88 contacts heme b.

It belongs to the globin family. As to quaternary structure, heterotetramer of two alpha chains and two beta chains. In terms of tissue distribution, red blood cells.

Involved in oxygen transport from the lung to the various peripheral tissues. In Anas platyrhynchos (Mallard), this protein is Hemoglobin subunit alpha-A (HBAA).